Consider the following 295-residue polypeptide: Ribosomal RNA small subunit methyltransferase A (295 aa).

Positions 29, 31, 56, 77, 102, and 128 each coordinate S-adenosyl-L-methionine.

Belongs to the class I-like SAM-binding methyltransferase superfamily. rRNA adenine N(6)-methyltransferase family. RsmA subfamily.

The protein resides in the cytoplasm. It carries out the reaction adenosine(1518)/adenosine(1519) in 16S rRNA + 4 S-adenosyl-L-methionine = N(6)-dimethyladenosine(1518)/N(6)-dimethyladenosine(1519) in 16S rRNA + 4 S-adenosyl-L-homocysteine + 4 H(+). Specifically dimethylates two adjacent adenosines (A1518 and A1519) in the loop of a conserved hairpin near the 3'-end of 16S rRNA in the 30S particle. May play a critical role in biogenesis of 30S subunits. The chain is Ribosomal RNA small subunit methyltransferase A from Listeria monocytogenes serotype 4a (strain HCC23).